Reading from the N-terminus, the 207-residue chain is Glycerol-3-phosphate acyltransferase (207 aa).

6 helical membrane passes run 1-21 (MIII…GKYF), 42-62 (ILGV…GTLA), 65-85 (IPII…FAII), 105-125 (AGVL…IFLL), 138-158 (ITVA…GFIL), and 159-179 (TDYD…IIIR).

It belongs to the PlsY family. In terms of assembly, probably interacts with PlsX.

The protein localises to the cell membrane. It catalyses the reaction an acyl phosphate + sn-glycerol 3-phosphate = a 1-acyl-sn-glycero-3-phosphate + phosphate. It participates in lipid metabolism; phospholipid metabolism. Its function is as follows. Catalyzes the transfer of an acyl group from acyl-phosphate (acyl-PO(4)) to glycerol-3-phosphate (G3P) to form lysophosphatidic acid (LPA). This enzyme utilizes acyl-phosphate as fatty acyl donor, but not acyl-CoA or acyl-ACP. This chain is Glycerol-3-phosphate acyltransferase, found in Streptococcus agalactiae serotype Ia (strain ATCC 27591 / A909 / CDC SS700).